Consider the following 50-residue polypeptide: MAREIITLACTECKRRNYTTTKNKQKHPERLELRKYCKWCRKHTIHREVK.

The protein belongs to the bacterial ribosomal protein bL33 family.

The protein is Large ribosomal subunit protein bL33 (rpmG) of Aquifex aeolicus (strain VF5).